The sequence spans 155 residues: Ribosomal RNA large subunit methyltransferase H (155 aa).

Residues Leu73, Gly104, and 123-128 contribute to the S-adenosyl-L-methionine site; that span reads ISKMTF.

This sequence belongs to the RNA methyltransferase RlmH family. Homodimer.

It is found in the cytoplasm. It catalyses the reaction pseudouridine(1915) in 23S rRNA + S-adenosyl-L-methionine = N(3)-methylpseudouridine(1915) in 23S rRNA + S-adenosyl-L-homocysteine + H(+). In terms of biological role, specifically methylates the pseudouridine at position 1915 (m3Psi1915) in 23S rRNA. The sequence is that of Ribosomal RNA large subunit methyltransferase H from Francisella tularensis subsp. novicida (strain U112).